The sequence spans 480 residues: Cysteine--tRNA ligase (480 aa).

C29 serves as a coordination point for Zn(2+). The 'HIGH' region motif lies at 31–41; it reads VTVYDHCHIGH. Residues C209, H234, and E238 each contribute to the Zn(2+) site. Residues 266 to 270 carry the 'KMSKS' region motif; that stretch reads KMSKS. K269 is an ATP binding site.

Belongs to the class-I aminoacyl-tRNA synthetase family. Monomer. Zn(2+) serves as cofactor.

The protein localises to the cytoplasm. The catalysed reaction is tRNA(Cys) + L-cysteine + ATP = L-cysteinyl-tRNA(Cys) + AMP + diphosphate. This is Cysteine--tRNA ligase from Geobacter sp. (strain M21).